The primary structure comprises 744 residues: Probable methylmalonyl-CoA mutase, mitochondrial (744 aa).

Residues 605-737 form the B12-binding domain; the sequence is QPRIMVAKMG…EKLEANLPEA (133 aa). H618 is a binding site for adenosylcob(III)alamin.

This sequence belongs to the methylmalonyl-CoA mutase family. Homodimer. The cofactor is adenosylcob(III)alamin.

It is found in the mitochondrion matrix. It carries out the reaction (R)-methylmalonyl-CoA = succinyl-CoA. In terms of biological role, involved, in man, in the degradation of several amino acids, odd-chain fatty acids and cholesterol via propionyl-CoA to the tricarboxylic acid cycle. MCM has different functions in other species. This Caenorhabditis elegans protein is Probable methylmalonyl-CoA mutase, mitochondrial (mmcm-1).